Here is a 729-residue protein sequence, read N- to C-terminus: Fatty acid oxidation complex subunit alpha (729 aa).

The enoyl-CoA hydratase/isomerase stretch occupies residues M1 to K189. Position 296 (D296) interacts with substrate. A 3-hydroxyacyl-CoA dehydrogenase region spans residues E311–A729. NAD(+)-binding positions include M324, D343, V400 to E402, K407, and S429. H450 serves as the catalytic For 3-hydroxyacyl-CoA dehydrogenase activity. N453 provides a ligand contact to NAD(+). Substrate contacts are provided by N500 and Y660. The interval R708 to A729 is disordered.

In the N-terminal section; belongs to the enoyl-CoA hydratase/isomerase family. The protein in the C-terminal section; belongs to the 3-hydroxyacyl-CoA dehydrogenase family. Heterotetramer of two alpha chains (FadB) and two beta chains (FadA).

It catalyses the reaction a (3S)-3-hydroxyacyl-CoA + NAD(+) = a 3-oxoacyl-CoA + NADH + H(+). The catalysed reaction is a (3S)-3-hydroxyacyl-CoA = a (2E)-enoyl-CoA + H2O. The enzyme catalyses a 4-saturated-(3S)-3-hydroxyacyl-CoA = a (3E)-enoyl-CoA + H2O. It carries out the reaction (3S)-3-hydroxybutanoyl-CoA = (3R)-3-hydroxybutanoyl-CoA. It catalyses the reaction a (3Z)-enoyl-CoA = a 4-saturated (2E)-enoyl-CoA. The catalysed reaction is a (3E)-enoyl-CoA = a 4-saturated (2E)-enoyl-CoA. The protein operates within lipid metabolism; fatty acid beta-oxidation. Involved in the aerobic and anaerobic degradation of long-chain fatty acids via beta-oxidation cycle. Catalyzes the formation of 3-oxoacyl-CoA from enoyl-CoA via L-3-hydroxyacyl-CoA. It can also use D-3-hydroxyacyl-CoA and cis-3-enoyl-CoA as substrate. This is Fatty acid oxidation complex subunit alpha from Salmonella agona (strain SL483).